The following is a 92-amino-acid chain: Small ribosomal subunit protein uS19c (92 aa).

The protein belongs to the universal ribosomal protein uS19 family.

It is found in the plastid. The protein resides in the chloroplast. Protein S19 forms a complex with S13 that binds strongly to the 16S ribosomal RNA. This Staurastrum punctulatum (Green alga) protein is Small ribosomal subunit protein uS19c.